The sequence spans 181 residues: Der GTPase-activating protein YihI (181 aa).

2 disordered regions span residues 1–75 (MSRK…KKIP) and 145–181 (EPEAEEEFEEEAPVRKSRSDDDLLADFEDFDMDDYKG). A compositionally biased stretch (basic residues) spans 32–43 (RLRKKDKKRKGL). Residues 146–155 (PEAEEEFEEE) are compositionally biased toward acidic residues. Residues 156 to 165 (APVRKSRSDD) are compositionally biased toward basic and acidic residues. Positions 166–181 (DLLADFEDFDMDDYKG) are enriched in acidic residues.

The protein belongs to the YihI family. Interacts with Der.

Functionally, a GTPase-activating protein (GAP) that modifies Der/EngA GTPase function. May play a role in ribosome biogenesis. The sequence is that of Der GTPase-activating protein YihI from Vibrio vulnificus (strain CMCP6).